The primary structure comprises 65 residues: Neuropeptide-like protein 28 (65 aa).

A signal peptide spans 1–22 (MISTSSILILVFLLACFMATSA). Residues Tyr-29, Tyr-39, Tyr-47, and Tyr-55 each carry the tyrosine amide modification. Tryptophan amide is present on Trp-63.

Belongs to the YARP (YGGW-amide related peptide) family.

It localises to the secreted. May have antimicrobial activity. The polypeptide is Neuropeptide-like protein 28 (nlp-28) (Caenorhabditis elegans).